A 155-amino-acid polypeptide reads, in one-letter code: SsrA-binding protein (155 aa).

This sequence belongs to the SmpB family.

The protein resides in the cytoplasm. In terms of biological role, required for rescue of stalled ribosomes mediated by trans-translation. Binds to transfer-messenger RNA (tmRNA), required for stable association of tmRNA with ribosomes. tmRNA and SmpB together mimic tRNA shape, replacing the anticodon stem-loop with SmpB. tmRNA is encoded by the ssrA gene; the 2 termini fold to resemble tRNA(Ala) and it encodes a 'tag peptide', a short internal open reading frame. During trans-translation Ala-aminoacylated tmRNA acts like a tRNA, entering the A-site of stalled ribosomes, displacing the stalled mRNA. The ribosome then switches to translate the ORF on the tmRNA; the nascent peptide is terminated with the 'tag peptide' encoded by the tmRNA and targeted for degradation. The ribosome is freed to recommence translation, which seems to be the essential function of trans-translation. The sequence is that of SsrA-binding protein from Gloeothece citriformis (strain PCC 7424) (Cyanothece sp. (strain PCC 7424)).